The sequence spans 316 residues: Small ribosomal subunit protein RACK1 (316 aa).

WD repeat units lie at residues 4-46 (QMTL…WRLT), 52-93 (YGVP…WDLS), 94-135 (TGQT…WNTL), 137-180 (VCKY…WNLT), 181-221 (NCKL…LWDL), 222-263 (NEGK…WDLE), and 264-312 (GKVV…WQVS).

Belongs to the WD repeat G protein beta family. Ribosomal protein RACK1 subfamily.

The protein is Small ribosomal subunit protein RACK1 of Biomphalaria glabrata (Bloodfluke planorb).